Reading from the N-terminus, the 102-residue chain is uncharacterized protein (102 aa).

2 helical membrane-spanning segments follow: residues 24–44 and 55–75; these read AFIVPSAIFFFVFYFSLPVLT and IGAVSWAWLFAIAQFAMTWIL.

It localises to the cell membrane. This is an uncharacterized protein from Bacillus subtilis (strain 168).